The following is a 297-amino-acid chain: MFKGSIVALITPMDIKGNICKKSLKKLVKYHIKNKTNAIISVGTTGESATLNKNEHTNVIMHTLEYADEKIPIIAGTGSNATSESILLTKKLELSGISGCLNITPYYNKPTQEGLYLHFKSISESTDLPQILYNVPHRTGCDLLPQTIAKLAKFKNIIGLKDASGDLSRVNQIKSLVNKNFILISGDDTTALDFIQLGGNGVISVTANIAARHISKICKLALAGNFYKARKINEKLKILHNLLFKETNPIPIKWAAKYIGLIETDKIRLPMTQLLDKNKKNLKKIINLLQLNKNKFL.

Thr45 contacts pyruvate. Residue Tyr133 is the Proton donor/acceptor of the active site. The active-site Schiff-base intermediate with substrate is Lys161. Residue Ile203 participates in pyruvate binding.

This sequence belongs to the DapA family. In terms of assembly, homotetramer; dimer of dimers.

Its subcellular location is the cytoplasm. The catalysed reaction is L-aspartate 4-semialdehyde + pyruvate = (2S,4S)-4-hydroxy-2,3,4,5-tetrahydrodipicolinate + H2O + H(+). It participates in amino-acid biosynthesis; L-lysine biosynthesis via DAP pathway; (S)-tetrahydrodipicolinate from L-aspartate: step 3/4. Functionally, catalyzes the condensation of (S)-aspartate-beta-semialdehyde [(S)-ASA] and pyruvate to 4-hydroxy-tetrahydrodipicolinate (HTPA). The sequence is that of 4-hydroxy-tetrahydrodipicolinate synthase from Buchnera aphidicola subsp. Cinara cedri (strain Cc).